The sequence spans 6995 residues: Fibrous sheath-interacting protein 2 (6995 aa).

Disordered regions lie at residues 273–292, 308–336, and 351–476; these read EQKIEEQRRKSREESDRKKQ, DTGLKDDIGRNGFDYRGQNGTTFESSSKK, and GDQK…TDAP. Polar residues predominate over residues 359–396; it reads TSGQVSATVNQSQSSSKDVTKVSASSVTYPAEVQNSSS. The span at 397 to 421 shows a compositional bias: basic and acidic residues; that stretch reads EQKRSEVTKRLSDERGKNSTDDSAR. A compositionally biased stretch (polar residues) spans 424–442; that stretch reads IISTQLSPTRNAKLSQISL. Ser-430 is subject to Phosphoserine. The segment covering 443–452 has biased composition (basic and acidic residues); that stretch reads DHQKEEKEMK. Positions 453-463 are enriched in polar residues; that stretch reads STWNGGLSKKS. Positions 665-692 form a coiled coil; that stretch reads LEISLLYDKKAKAMDQIKNLKNVFVNFK. 9 disordered regions span residues 1452–1472, 2554–2595, 2699–2731, 3182–3270, 5489–5665, 5719–5740, 5823–5878, 5943–5996, and 6973–6995; these read PDPQPSCSHQNTETIDKDPPT, KSKR…VPQM, TKTKIKNKLSAGEKTPRESRSKTALGLPQTPQV, PVKM…PNFT, GPSA…KYKG, SKSSVKTDDRPMSKDKETMTEK, KDLS…SKSK, KEDE…PDKL, and SKVFSRSSGSIPKSSSPPHQDKR. Residues 2555–2565 show a composition bias toward basic and acidic residues; it reads SKREGEMHDSS. Residues 3187 to 3204 show a composition bias toward polar residues; that stretch reads PSNTSDTPRTRRSSQGSV. Residues 3220-3231 show a composition bias toward low complexity; it reads SVTSNSSSHISS. The span at 3232–3250 shows a compositional bias: polar residues; sequence CVENTNKSLEPMGRSNSEA. The span at 3255–3265 shows a compositional bias: basic residues; that stretch reads SRHKAHDHGQR. Residues 5496–5509 are compositionally biased toward basic and acidic residues; sequence DAKKEDESKVKPAT. Polar residues-rich tracts occupy residues 5523–5557, 5565–5625, and 5638–5650; these read MKSQGSQVQQLATSPPTSMKSQRIQVQQSVMSPPT, QVQQ…QSAM, and VQESSTSPPTTMK. Composition is skewed to basic and acidic residues over residues 5719–5738 and 5829–5877; these read SKSSVKTDDRPMSKDKETMT and GHRD…ESKS. The segment covering 5982 to 5993 has biased composition (polar residues); the sequence is SDVQKTPEQSSP. Residues 6977-6995 are compositionally biased toward low complexity; the sequence is SRSSGSIPKSSSPPHQDKR.

As to quaternary structure, may interact with AKAP4. In terms of tissue distribution, predominantly expressed in testis.

In terms of biological role, plays a role in spermatogenesis. The polypeptide is Fibrous sheath-interacting protein 2 (Fsip2) (Mus musculus (Mouse)).